The sequence spans 440 residues: Eukaryotic translation initiation factor 3 subunit E (440 aa).

The PCI domain occupies Val219 to Thr392.

Belongs to the eIF-3 subunit E family. As to quaternary structure, component of the eukaryotic translation initiation factor 3 (eIF-3) complex.

It localises to the cytoplasm. In terms of biological role, component of the eukaryotic translation initiation factor 3 (eIF-3) complex, which is involved in protein synthesis of a specialized repertoire of mRNAs and, together with other initiation factors, stimulates binding of mRNA and methionyl-tRNAi to the 40S ribosome. The eIF-3 complex specifically targets and initiates translation of a subset of mRNAs involved in cell proliferation. The polypeptide is Eukaryotic translation initiation factor 3 subunit E (Brugia malayi (Filarial nematode worm)).